The chain runs to 244 residues: Centromere protein H (244 aa).

M1 carries the post-translational modification N-acetylmethionine. A disordered region spans residues 1–33 (METQSEEQAVTKPADSGGEGGPPQVAGAQAARP). A Phosphoserine modification is found at S16. The span at 22-31 (PPQVAGAQAA) shows a compositional bias: low complexity. K64 participates in a covalent cross-link: Glycyl lysine isopeptide (Lys-Gly) (interchain with G-Cter in SUMO2). T65 carries the phosphothreonine modification. Coiled coils occupy residues 66–104 (PEQI…DRMQ) and 146–189 (DLEE…MENS).

This sequence belongs to the CENP-H/MCM16 family. As to quaternary structure, self-associates. Component of the CENPA-NAC complex, at least composed of CENPA, CENPC, CENPH, CENPM, CENPN, CENPT and CENPU. The CENPA-NAC complex interacts with the CENPA-CAD complex, composed of CENPI, CENPK, CENPL, CENPO, CENPP, CENPQ, CENPR and CENPS. Interacts with KIF2C and NDC80.

It localises to the nucleus. The protein localises to the chromosome. It is found in the centromere. Its subcellular location is the kinetochore. In terms of biological role, component of the CENPA-NAC (nucleosome-associated) complex, a complex that plays a central role in assembly of kinetochore proteins, mitotic progression and chromosome segregation. The CENPA-NAC complex recruits the CENPA-CAD (nucleosome distal) complex and may be involved in incorporation of newly synthesized CENPA into centromeres. The chain is Centromere protein H (CENPH) from Bos taurus (Bovine).